Consider the following 255-residue polypeptide: Tryptophan synthase alpha chain (255 aa).

Residues Glu44 and Asp55 each act as proton acceptor in the active site.

It belongs to the TrpA family. In terms of assembly, tetramer of two alpha and two beta chains.

The catalysed reaction is (1S,2R)-1-C-(indol-3-yl)glycerol 3-phosphate + L-serine = D-glyceraldehyde 3-phosphate + L-tryptophan + H2O. It participates in amino-acid biosynthesis; L-tryptophan biosynthesis; L-tryptophan from chorismate: step 5/5. Functionally, the alpha subunit is responsible for the aldol cleavage of indoleglycerol phosphate to indole and glyceraldehyde 3-phosphate. This Dehalococcoides mccartyi (strain ATCC BAA-2100 / JCM 16839 / KCTC 5957 / BAV1) protein is Tryptophan synthase alpha chain.